The chain runs to 485 residues: Argininosuccinate lyase (485 aa).

Belongs to the lyase 1 family. Argininosuccinate lyase subfamily.

The protein localises to the cytoplasm. The enzyme catalyses 2-(N(omega)-L-arginino)succinate = fumarate + L-arginine. Its pathway is amino-acid biosynthesis; L-arginine biosynthesis; L-arginine from L-ornithine and carbamoyl phosphate: step 3/3. The sequence is that of Argininosuccinate lyase from Nitrosopumilus maritimus (strain SCM1).